A 461-amino-acid chain; its full sequence is Major capsid protein (461 aa).

Polar residues predominate over residues 1-18 (MSTPTISADTTAQNATST). A disordered region spans residues 1–22 (MSTPTISADTTAQNATSTEVRE).

It localises to the virion. Functionally, major protein of the capsid. The chain is Major capsid protein (MCP) from Spodoptera frugiperda ascovirus 1a (SfAV-1a).